The following is a 378-amino-acid chain: MNIWLNMLITTGLGAIIGGYTNHLAIKMLFRPHRPIYIGKFQVPFTPGLIPKRRDELAVQLGKMVVDHLLTPEGIGKKLTNKEFQTSLIRWTQVEVDKVITNEQSLRDMLEKWNLEHVEEEAIGKIEHVITEKIHAFLAEYYTYTWEQALPHSVHEKVENAIPNVASFILKRGISFLESEEGKERLSKMIDDFFASRGTLLNLVGMFLGNVSLVDRVQPEVIKFLGQDGTERLLTDVLQKEWEKLKGRDVKELETFVEKEMIVNSILSAVKVEETVSRFLNQSVQQVCEPVRETIVGKVVPSAVEKGLKWGTENVGSILGNLQLAEIVQQEVSTFSTERLEDLVLSITKNELKMITYLGALLGGTIGFIQGLLLLFLK.

Transmembrane regions (helical) follow at residues 1–21 and 357–377; these read MNIW…GGYT and YLGA…LLFL.

This sequence belongs to the UPF0754 family.

The protein resides in the cell membrane. The sequence is that of UPF0754 membrane protein BcerKBAB4_0766 from Bacillus mycoides (strain KBAB4) (Bacillus weihenstephanensis).